The primary structure comprises 220 residues: Nucleolar protein 3 (220 aa).

Residue Gly-2 is the site of N-myristoyl glycine attachment. Positions 4-95 (VQERPSETID…MPDPAWDWQH (92 aa)) constitute a CARD domain. An essential for interaction with BAX region spans residues 20–70 (VETLQADSGLLLDALVARGVLTGPEYEALDALPDAERRVRRLLLLVQSKGE). Residues 111-220 (GHWTPEAPSS…FQEEDESEDS (110 aa)) are disordered. At Thr-149 the chain carries Phosphothreonine; by CK2. Positions 152-220 (EPELEAEATE…FQEEDESEDS (69 aa)) are enriched in acidic residues.

As to quaternary structure, oligomerizes (via CARD doamin). Interacts (via CARD domain) with CASP2; inhibits CASP2 activity in a phosphorylation-dependent manner. Interacts with CASP8; decreases CASP8 activity in a mitochondria localization- and phosphorylation-dependent manner and this interaction is dissociated by calcium. Interacts with TFPT; translocates NOL3 into the nucleus and negatively regulated TFPT-induced cell death. Interacts directly (via CARD domain) with FAS and FADD (via DED domain); inhibits death-inducing signaling complex (DISC) assembly by inhibiting the increase in FAS-FADD binding induced by FAS activation. Interacts (via CARD domain) with BAX (via a C-terminal 33 residues); inhibits BAX activation and translocation and consequently cytochrome c release from mitochondria. Interacts with PPM1G; may dephosphorylate NOL3. Interacts (via CARD domain) with BBC3 (via BH3 domain); preventing the association of BBC3 with BCL2 and resulting in activation of CASP8. Interacts (via CARD domain) with BAD(via BH3 domain); preventing the association of BAD with BCL2. Interacts directly (via CARD domain) with TNFRSF1A; inhibits TNF-signaling pathway. Phosphorylation at Thr-149 is required for its antiapoptotic effect by blocking death-inducing signaling complex death-inducing signaling complex (DISC) activity through the control of interaction with CASP8. Phosphorylation at Thr-149 results in translocation to mitochondria and this translocation enables the binding to CASP8. Dephosphorylated at Thr-149 by calcineurin; doesn't inhibit the association between FADD and CASP8 and the consequent apoptosis. In terms of processing, polyubiquitinated by MDM2; promoting proteasomal-dependent degradation in response to apoptotic stimuli.

It is found in the cytoplasm. It localises to the mitochondrion. The protein localises to the sarcoplasmic reticulum. The protein resides in the membrane. Apoptosis repressor that blocks multiple modes of cell death. Inhibits extrinsic apoptotic pathways through two different ways. Firstly by interacting with FAS and FADD upon FAS activation blocking death-inducing signaling complex (DISC) assembly. Secondly by interacting with CASP8 in a mitochondria localization- and phosphorylation-dependent manner, limiting the amount of soluble CASP8 available for DISC-mediated activation. Inhibits intrinsic apoptotic pathway in response to a wide range of stresses, through its interaction with BAX resulting in BAX inactivation, preventing mitochondrial dysfunction and release of pro-apoptotic factors. Inhibits calcium-mediated cell death by functioning as a cytosolic calcium buffer, dissociating its interaction with CASP8 and maintaining calcium homeostasis. Negatively regulates oxidative stress-induced apoptosis by phosphorylation-dependent suppression of the mitochondria-mediated intrinsic pathway, by blocking CASP2 activation and BAX translocation. Negatively regulates hypoxia-induced apoptosis in part by inhibiting the release of cytochrome c from mitochondria in a caspase-independent manner. Also inhibits TNF-induced necrosis by preventing TNF-signaling pathway through TNFRSF1A interaction abrogating the recruitment of RIPK1 to complex I. Finally through its role as apoptosis repressor, promotes vascular remodeling through inhibition of apoptosis and stimulation of proliferation, in response to hypoxia. Inhibits too myoblast differentiation through caspase inhibition. The sequence is that of Nucleolar protein 3 (Nol3) from Mus musculus (Mouse).